The sequence spans 359 residues: S-adenosylmethionine:tRNA ribosyltransferase-isomerase (359 aa).

This sequence belongs to the QueA family. Monomer.

Its subcellular location is the cytoplasm. The catalysed reaction is 7-aminomethyl-7-carbaguanosine(34) in tRNA + S-adenosyl-L-methionine = epoxyqueuosine(34) in tRNA + adenine + L-methionine + 2 H(+). It functions in the pathway tRNA modification; tRNA-queuosine biosynthesis. In terms of biological role, transfers and isomerizes the ribose moiety from AdoMet to the 7-aminomethyl group of 7-deazaguanine (preQ1-tRNA) to give epoxyqueuosine (oQ-tRNA). This is S-adenosylmethionine:tRNA ribosyltransferase-isomerase from Ralstonia pickettii (strain 12J).